Reading from the N-terminus, the 491-residue chain is Cytochrome P450 2B4 (491 aa).

At S128 the chain carries Phosphoserine; by PKA. C436 contributes to the heme binding site.

This sequence belongs to the cytochrome P450 family. The cofactor is heme.

Its subcellular location is the endoplasmic reticulum membrane. It localises to the microsome membrane. The enzyme catalyses an organic molecule + reduced [NADPH--hemoprotein reductase] + O2 = an alcohol + oxidized [NADPH--hemoprotein reductase] + H2O + H(+). Cytochromes P450 are a group of heme-thiolate monooxygenases. In liver microsomes, this enzyme is involved in an NADPH-dependent electron transport pathway. It oxidizes a variety of structurally unrelated compounds, including steroids, fatty acids, and xenobiotics. In the epoxidation of arachidonic acid it has a unique preference for the 5,6-olefin. This is Cytochrome P450 2B4 (CYP2B4) from Oryctolagus cuniculus (Rabbit).